The chain runs to 395 residues: MNAADRMGARVALLLLLVLGSPQSGVHGEEGLDFPEYDGVDRVINVNAKNYKNVFKKYEVLALLYHEPPEDDKASQRQFEMEELILELAAQVLEDKGVGFGLVDSEKDAAVAKKLGLTEEDSIYVFKEDEVIEYDGEFSADTLVEFLLDVLEDPVELIEGERELQAFENIEDEIKLIGYFKNKDSEHYKAFKEAAEEFHPYIPFFATFDSKVAKKLTLKLNEIDFYEAFMEEPVTIPDKPNSEEEIVNFVEEHRRSTLRKLKPESMYETWEDDMDGIHIVAFAEEADPDGYEFLEILKSVAQDNTDNPDLSIIWIDPDDFPLLVPYWEKTFDIDLSAPQIGVVNVTDADSVWMEMDDEEDLPSAEELEDWLEDVLEGEINTEDDDDEDDDDDDDD.

The first 28 residues, 1–28 (MNAADRMGARVALLLLLVLGSPQSGVHG), serve as a signal peptide directing secretion. Tyrosine 37 carries the phosphotyrosine modification. Serine 75 is subject to Phosphoserine. Phosphothreonine is present on threonine 118. Serine 210 carries the phosphoserine modification. The N-linked (GlcNAc...) asparagine glycan is linked to asparagine 344. The tract at residues 376–395 (EGEINTEDDDDEDDDDDDDD) is disordered.

It belongs to the calsequestrin family. In terms of assembly, monomer; increases in response to a depletion of intracellular calcium. Homodimer. Homotetramer and homopolymer. Can form linear homooligomers. Ca(2+) ions promote oligomerization. Interacts (via C-terminal end and preferentially with the monomeric form) with STIM1; this interaction increases in response to a depletion of intracellular calcium, decreases both STIM1 aggregation and clustering, interaction of STIM1 with ORAI1 and store-operated Ca(2+) entry (SOCE) activity. Interacts with ASPH and TRDN. Post-translationally, N-glycosylated. In terms of tissue distribution, detected in skeletal muscle (at protein level). Detected in skeletal muscle.

The protein resides in the endoplasmic reticulum. It localises to the sarcoplasmic reticulum. The protein localises to the sarcoplasmic reticulum lumen. Its subcellular location is the mitochondrion matrix. It is found in the sarcoplasmic reticulum membrane. In terms of biological role, calsequestrin is a high-capacity, moderate affinity, calcium-binding protein and thus acts as an internal calcium store in muscle. Calcium ions are bound by clusters of acidic residues at the protein surface, often at the interface between subunits. Can bind around 80 Ca(2+) ions. Regulates the release of lumenal Ca(2+) via the calcium release channel RYR1; this plays an important role in triggering muscle contraction. Negatively regulates store-operated Ca(2+) entry (SOCE) activity. This chain is Calsequestrin-1 (CASQ1), found in Oryctolagus cuniculus (Rabbit).